Reading from the N-terminus, the 900-residue chain is Exosome complex component 10 homolog (900 aa).

2 disordered regions span residues 1-31 (MPRT…SEDV) and 147-174 (TSIE…TGTP). Basic and acidic residues predominate over residues 8-28 (VHQEAKEESAQADQPPKKSAS). In terms of domain architecture, 3'-5' exonuclease spans 273–438 (VVDTVEKLKQ…YVYGRMTNDL (166 aa)). Mg(2+) is bound by residues Asp-296, Glu-298, Asp-354, and Asp-423. An HRDC domain is found at 485–565 (DNRQLYALRG…LKARDQPLVK (81 aa)). Positions 731-900 (EQLKRKHPQA…FSNVRKEGKK (170 aa)) are disordered. Basic residues predominate over residues 809–826 (RKQKKNQFQRGFKAKNRG). The segment covering 878–887 (NNRNNKQFNK) has biased composition (low complexity).

Belongs to the exosome component 10/RRP6 family. As to quaternary structure, component of the RNA exosome complex. Interacts with spn-A/Rad51; the interaction is required for the recruitment of spn-A to the DNA-damage response foci. Interacts with Su(var)3-9, a heterochromatin factor; the interaction promotes association of Rrp6 with a subset of genomic loci. Interacts with Su(var)205, a heterochromatin factor. Interacts with HDAC1, a heterochromatin factor. Requires Mg(2+) as cofactor. As to expression, salivary gland (at protein level).

It localises to the nucleus. It is found in the chromosome. Its subcellular location is the cytoplasm. The protein localises to the cell cortex. The protein resides in the cytoskeleton. It localises to the microtubule organizing center. It is found in the centrosome. Its subcellular location is the spindle. The protein localises to the midbody. Catalytic component of the RNA exosome complex which has 3'-&gt;5' exoribonuclease activity and participates in a multitude of cellular RNA processing and degradation events. Degrades a large variety of non-coding RNAs that are processed by the exosome, such as pre-rRNAs and some small nucleolar RNAs (snoRNAs). Degrades transcripts derived from different types of heterochromatic repeats, such as subtelomeric minisatellites and simple gagaa repeats. Degrades transcripts derived from transposons and transposon fragments. Degrades chromatin-associated transcripts and contributes to the compaction of heterochromatin. Required for the efficient repair of DNA double-strand breaks via homologous recombination after irradiation. Required for cell proliferation and error-free mitosis. The polypeptide is Exosome complex component 10 homolog (Drosophila melanogaster (Fruit fly)).